A 368-amino-acid polypeptide reads, in one-letter code: tRNA-specific 2-thiouridylase MnmA (368 aa).

ATP contacts are provided by residues 11–18 and methionine 37; that span reads GMSGGVDS. Residues 97 to 99 form an interaction with target base in tRNA region; sequence NPD. Cysteine 102 functions as the Nucleophile in the catalytic mechanism. The cysteines at positions 102 and 199 are disulfide-linked. Glycine 127 is an ATP binding site. An interaction with tRNA region spans residues 149–151; it reads KDQ. Cysteine 199 serves as the catalytic Cysteine persulfide intermediate. Residues 311 to 312 form an interaction with tRNA region; sequence RY.

It belongs to the MnmA/TRMU family. As to quaternary structure, interacts with TusE.

The protein localises to the cytoplasm. It catalyses the reaction S-sulfanyl-L-cysteinyl-[protein] + uridine(34) in tRNA + AH2 + ATP = 2-thiouridine(34) in tRNA + L-cysteinyl-[protein] + A + AMP + diphosphate + H(+). Catalyzes the 2-thiolation of uridine at the wobble position (U34) of tRNA(Lys), tRNA(Glu) and tRNA(Gln), leading to the formation of s(2)U34, the first step of tRNA-mnm(5)s(2)U34 synthesis. Sulfur is provided by IscS, via a sulfur-relay system. Binds ATP and its substrate tRNAs. This Salmonella paratyphi B (strain ATCC BAA-1250 / SPB7) protein is tRNA-specific 2-thiouridylase MnmA.